A 208-amino-acid chain; its full sequence is Imidazole glycerol phosphate synthase subunit HisH (208 aa).

The Glutamine amidotransferase type-1 domain maps to 1–206 (MIVIIDYDTG…KEVTYSCKSS (206 aa)). The Nucleophile role is filled by C79. Catalysis depends on residues H181 and E183.

As to quaternary structure, heterodimer of HisH and HisF.

It localises to the cytoplasm. It catalyses the reaction 5-[(5-phospho-1-deoxy-D-ribulos-1-ylimino)methylamino]-1-(5-phospho-beta-D-ribosyl)imidazole-4-carboxamide + L-glutamine = D-erythro-1-(imidazol-4-yl)glycerol 3-phosphate + 5-amino-1-(5-phospho-beta-D-ribosyl)imidazole-4-carboxamide + L-glutamate + H(+). It carries out the reaction L-glutamine + H2O = L-glutamate + NH4(+). It functions in the pathway amino-acid biosynthesis; L-histidine biosynthesis; L-histidine from 5-phospho-alpha-D-ribose 1-diphosphate: step 5/9. Functionally, IGPS catalyzes the conversion of PRFAR and glutamine to IGP, AICAR and glutamate. The HisH subunit catalyzes the hydrolysis of glutamine to glutamate and ammonia as part of the synthesis of IGP and AICAR. The resulting ammonia molecule is channeled to the active site of HisF. The protein is Imidazole glycerol phosphate synthase subunit HisH of Listeria monocytogenes serovar 1/2a (strain ATCC BAA-679 / EGD-e).